The sequence spans 524 residues: Phosphoenolpyruvate carboxykinase (ATP) (524 aa).

R52, Y188, and K194 together coordinate substrate. ATP is bound by residues K194, H213, and 229 to 237 (GLSGTGKTT). Mn(2+) contacts are provided by K194 and H213. D250 lines the Mn(2+) pocket. 3 residues coordinate ATP: E278, R314, and T439. A substrate-binding site is contributed by R314.

It belongs to the phosphoenolpyruvate carboxykinase (ATP) family. Mn(2+) serves as cofactor.

Its subcellular location is the cytoplasm. The enzyme catalyses oxaloacetate + ATP = phosphoenolpyruvate + ADP + CO2. Its pathway is carbohydrate biosynthesis; gluconeogenesis. Involved in the gluconeogenesis. Catalyzes the conversion of oxaloacetate (OAA) to phosphoenolpyruvate (PEP) through direct phosphoryl transfer between the nucleoside triphosphate and OAA. This Campylobacter jejuni subsp. jejuni serotype O:2 (strain ATCC 700819 / NCTC 11168) protein is Phosphoenolpyruvate carboxykinase (ATP).